The primary structure comprises 512 residues: MSKKDCILAIDQGTTSTRSIVFGKDAQALAISRREFPQHYPELGWVEHDVEDIWRDVLATARETIEEVGGPERIAALGITNQRETIVIWDRETGRAIHRALVWQDRRTAHECNLLRQQGKEAMVREKTGLLLDPYFSASKIAWLLDHVPDARRRAEAGELAAGTIDSFLLWRLTGGKRHATDITNACRTSLFNIHTQEWDEELLKLFNVPRALLPEVCDNSSDFGETEAKLFGEKIAIGGMAGDQHAAVIGQACFHEGMAKATYGTGCFMLLNTGEKPIMSNNRLLTTIAYRIGGKTFYALEGSIFVAGAGIKWLRDGLKLITHASQTDDMATRIPDSHGVYMVPAFVGLGAPHWDPDSRGLICGLTLGSTQAHIARAMLESVAYQTYDLIRAMREDGAMRTSILRIDGGMAVNDWFAQFLSSMLKAEVERPVNIETTALGAAFLAGLQVGLWKSLDEVTATWKQERVFAPKMDPAQRRIMIDGWHDAVRRTLTPSAPVAHSSVETTASQAA.

ADP is bound at residue Thr-14. The ATP site is built by Thr-14, Thr-15, and Ser-16. Position 14 (Thr-14) interacts with sn-glycerol 3-phosphate. An ADP-binding site is contributed by Arg-18. The sn-glycerol 3-phosphate site is built by Arg-83, Glu-84, Tyr-135, and Asp-244. Glycerol contacts are provided by Arg-83, Glu-84, Tyr-135, Asp-244, and Gln-245. Thr-266, Gly-309, Gly-410, and Asn-414 together coordinate ADP. Positions 266, 309, and 410 each coordinate ATP.

This sequence belongs to the FGGY kinase family.

The catalysed reaction is glycerol + ATP = sn-glycerol 3-phosphate + ADP + H(+). It functions in the pathway polyol metabolism; glycerol degradation via glycerol kinase pathway; sn-glycerol 3-phosphate from glycerol: step 1/1. Inhibited by fructose 1,6-bisphosphate (FBP). Functionally, key enzyme in the regulation of glycerol uptake and metabolism. Catalyzes the phosphorylation of glycerol to yield sn-glycerol 3-phosphate. This Gluconobacter oxydans (strain 621H) (Gluconobacter suboxydans) protein is Glycerol kinase.